The sequence spans 208 residues: AN1-type zinc finger protein 6 (208 aa).

Residues 8–42 (SQVPMLCSTGCGFYGNPRTNGMCSVCYKEHLQRQN) form an A20-type zinc finger. Residues cysteine 14, cysteine 18, cysteine 30, and cysteine 33 each coordinate Zn(2+). The segment at 41–110 (QNSSNGRISP…ASSQVDSTSV (70 aa)) is disordered. Position 49 is a phosphoserine (serine 49). Residues 54–68 (SVTSLSESLPVQCTD) are compositionally biased toward polar residues. The segment covering 83–94 (SSVQPSPVSNQS) has biased composition (low complexity). Positions 95-110 (LLSESVASSQVDSTSV) are enriched in polar residues. The segment at 143–189 (KQKKNRCFMCRKKVGLTGFECRCGNVYCGVHRYSDVHNCSYNYKADA) adopts an AN1-type zinc-finger fold. Zn(2+) is bound by residues cysteine 149, cysteine 152, cysteine 163, cysteine 165, cysteine 170, histidine 173, histidine 179, and cysteine 181. N6-acetyllysine is present on lysine 204.

Interacts with PKN1.

In Bos taurus (Bovine), this protein is AN1-type zinc finger protein 6 (ZFAND6).